The chain runs to 241 residues: Large ribosomal subunit protein uL13c (241 aa).

Residues methionine 1–lysine 50 constitute a chloroplast transit peptide.

Belongs to the universal ribosomal protein uL13 family. In terms of assembly, part of the 50S ribosomal subunit.

Its subcellular location is the plastid. The protein resides in the chloroplast. In Arabidopsis thaliana (Mouse-ear cress), this protein is Large ribosomal subunit protein uL13c (RPL13).